A 662-amino-acid polypeptide reads, in one-letter code: Hypoxia-inducible factor 3-alpha (662 aa).

Positions 1-25 (MDWDQDRSNTELRKEKSRDAARSRR) are disordered. Positions 12-65 (LRKEKSRDAARSRRSQETEVLYQLAHTLPFARGVSAHLDKASIMRLTISYLRMH) constitute a bHLH domain. Positions 75–98 (QVEKGGEPLDACYLKALEGFVMVL) are nuclear localization signal (isoform 2). PAS domains lie at 80–150 (GEPL…PNLS) and 225–295 (PHPA…LSKG). The interval 228–272 (ASLEPPLGRGAFLSRHSLDMKFTYCDERIAEVAGYSPDDLIGCSA) is nuclear export signal (isoform 2). 2 disordered regions span residues 352–377 (EQTE…GNSV) and 416–446 (PILD…DLPD). Positions 414–418 (MAPIL) match the LRRLL motif. The span at 426-437 (TPSTPQATRRPQ) shows a compositional bias: low complexity. The segment at 448–581 (LTVGLENAHR…SEDKGLELLE (134 aa)) is ODD. Positions 450 to 501 (VGLENAHRLSTAQKNKTVETDLDIAQDPDTLDLEMLAPYISMDDDFQLNSSE) are NTAD. A Glycyl lysine isopeptide (Lys-Gly) (interchain with G-Cter in ubiquitin) cross-link involves residue Lys463. Positions 485-492 (LAPYISMD) match the LAPYISMD motif. Pro487 carries the 4-hydroxyproline modification. The interval 500-595 (SEQLPKVHRR…KRSPRLEPGS (96 aa)) is disordered. Basic residues predominate over residues 505–521 (KVHRRPPRVARRPRARS). Residue Lys565 forms a Glycyl lysine isopeptide (Lys-Gly) (interchain with G-Cter in ubiquitin) linkage. The span at 572 to 584 (SEDKGLELLETKP) shows a compositional bias: basic and acidic residues.

As to quaternary structure, isoform 1 interacts with ARNT. Isoform 2 interacts with HIF1A. Isoform 2 interacts EPAS1. Isoform 2 interacts (via C-terminus domain) with BAD; the interaction reduces the binding between BAD and BAX. Isoform 2 (via C-terminus domain) interacts with BCL2L2 and MCL1. Interacts with VHL. In terms of processing, in normoxia, hydroxylated on Pro-487 in the oxygen-dependent degradation domain (ODD) by PHD. The hydroxylated proline promotes interaction with VHL, initiating rapid ubiquitination and subsequent proteasomal degradation. Ubiquitinated; ubiquitination occurs in a VHL- and oxygen-dependent pathway and subsequently targeted for proteasomal degradation. In terms of tissue distribution, isoform 3 is expressed in endothelial cells of vessels and capillaries in alveoli of the neonatal lung (at protein level). Expressed in lung, brain, heart and kidney. Isoform 2 is expressed in heart and lung. Isoform 2 is highly expressed in the epithelial cell layer of the cornea with lower expression in the layers of ganglion cells, inner nuclear cells, and rods and cones of the retina. Isoform 2 is expressed in the cerebellum only in the Purkinje cell layer.

It is found in the nucleus. The protein localises to the cytoplasm. The protein resides in the nucleus speckle. It localises to the mitochondrion. Functionally, acts as a transcriptional regulator in adaptive response to low oxygen tension. Acts as a regulator of hypoxia-inducible gene expression. Plays a role in the development of the cardiorespiratory system. Acts as a positive regulator of hypoxia-inducible gene expression. Associates to core DNA sequence 5'-TACGTG-3' within the hypoxia response element (HRE) of target gene promoters in a ARNT-dependent manner, and hence also participates in the transcriptional activation of reporter genes driven by HRE. In terms of biological role, attenuates the ability of transcription factor HIF1A, EPAS1 and the HIF1A-ARNT complex to bind to hypoxia-responsive elements (HRE) located within the enhancer/promoter of hypoxia-inducible target genes and hence inhibits HRE-driven transcriptional activation. Functions as an inhibitor of angiogenesis in hypoxic cells of the cornea. May act as a tumor suppressor. May also be involved in apoptosis. Its function is as follows. Attenuates the ability of transcription factor HIF1A, EPAS1 and the HIF1A-ARNT complex to bind to hypoxia-responsive elements (HRE) located within the enhancer/promoter of hypoxia-inducible target genes and hence inhibits HRE-driven transcriptional activation. Also plays a role in the development of the lung and heart during embryonic and neonatal stages. This is Hypoxia-inducible factor 3-alpha from Mus musculus (Mouse).